The chain runs to 303 residues: N-acetyl-D-glucosamine kinase (303 aa).

Residues 4-11 (GFDIGGTK) and 133-140 (GVGGGLVL) each bind ATP. Positions 157, 177, 179, and 184 each coordinate Zn(2+).

This sequence belongs to the ROK (NagC/XylR) family. NagK subfamily.

It catalyses the reaction N-acetyl-D-glucosamine + ATP = N-acetyl-D-glucosamine 6-phosphate + ADP + H(+). It participates in cell wall biogenesis; peptidoglycan recycling. Functionally, catalyzes the phosphorylation of N-acetyl-D-glucosamine (GlcNAc) derived from cell-wall degradation, yielding GlcNAc-6-P. This chain is N-acetyl-D-glucosamine kinase, found in Salmonella dublin (strain CT_02021853).